The chain runs to 77 residues: Serine protease inhibitor 2 (77 aa).

An N-terminal signal peptide occupies residues 1-17 (MMFTPLIVLTLLVLATA). Intrachain disulfides connect C21–C53, C30–C48, C33–C44, C37–C74, and C55–C68. In terms of domain architecture, TIL spans 21 to 74 (CGPNEQWSDCPKCELQCGESDKPCATICGEPKCYCSPDKYRRIPDGRCIRKIQC).

It localises to the secreted. Defends the organism against the host's proteinases. This Anisakis simplex (Herring worm) protein is Serine protease inhibitor 2.